A 1080-amino-acid polypeptide reads, in one-letter code: Ubiquitin-activating enzyme E1 1 (1080 aa).

Residues 1–14 (MLHKRASEANDKND) show a composition bias toward basic and acidic residues. Disordered regions lie at residues 1–20 (MLHK…IIGS) and 29–50 (RIDF…GSSR). Low complexity predominate over residues 38 to 49 (DKSSSILASGSS). Residues alanine 502, aspartate 528, arginine 539, lysine 552, and 600 to 601 (DN) each bind ATP. Cysteine 656 acts as the Glycyl thioester intermediate in catalysis.

The protein belongs to the ubiquitin-activating E1 family. In terms of assembly, monomer. Expressed in leaves, flowers, roots and stems. Detected in germinating seeds, cotyledons, hypocotyls, vascular tissues, anthers, filaments, pollen, style, stigma, sepals, petals, ovary, developing ovules, funiculi and silique walls.

It carries out the reaction ATP + ubiquitin + [E1 ubiquitin-activating enzyme]-L-cysteine = AMP + diphosphate + S-ubiquitinyl-[E1 ubiquitin-activating enzyme]-L-cysteine.. The protein operates within protein modification; protein ubiquitination. In terms of biological role, activates ubiquitin by first adenylating its C-terminal glycine residue with ATP, and thereafter linking this residue to the side chain of a cysteine residue in E1, yielding a ubiquitin-E1 thioester and free AMP. The polypeptide is Ubiquitin-activating enzyme E1 1 (UBA1) (Arabidopsis thaliana (Mouse-ear cress)).